Reading from the N-terminus, the 491-residue chain is Proline--tRNA ligase (491 aa).

Belongs to the class-II aminoacyl-tRNA synthetase family. ProS type 3 subfamily. In terms of assembly, homodimer.

It is found in the cytoplasm. The catalysed reaction is tRNA(Pro) + L-proline + ATP = L-prolyl-tRNA(Pro) + AMP + diphosphate. In terms of biological role, catalyzes the attachment of proline to tRNA(Pro) in a two-step reaction: proline is first activated by ATP to form Pro-AMP and then transferred to the acceptor end of tRNA(Pro). In Halorubrum lacusprofundi (strain ATCC 49239 / DSM 5036 / JCM 8891 / ACAM 34), this protein is Proline--tRNA ligase.